The primary structure comprises 521 residues: uncharacterized protein (521 aa).

Positions 14–41 (QFQQMQHQMQQQQQQQMQQQQQQQQQQQ) form a coiled coil. Low complexity-rich tracts occupy residues 238–266 (LSGS…TSSS), 275–353 (SSTS…NNNN), and 423–482 (PRLS…PNNP). Disordered regions lie at residues 238–357 (LSGS…ISGF) and 413–491 (TAVA…SNNG).

This is an uncharacterized protein from Dictyostelium discoideum (Social amoeba).